A 205-amino-acid chain; its full sequence is Protein phosphatase inhibitor 2 (205 aa).

The segment at 1-44 is disordered; it reads MAASTASHRPIKGILKNKTSTTSSMVASAEQPRGNVDEELSKKS. A2 is subject to N-acetylalanine. Required for binding PPP1CC stretches follow at residues 12 to 17 and 43 to 55; these read KGILKN and KSQK…ILAT. The span at 17–26 shows a compositional bias: polar residues; the sequence is NKTSTTSSMV. Over residues 35–44 the composition is skewed to basic and acidic residues; sequence NVDEELSKKS. Phosphoserine; by ATM is present on S44. The residue at position 73 (T73) is a Phosphothreonine; by GSK3. S87 bears the Phosphoserine mark. T89 and T92 each carry phosphothreonine. The tract at residues 111–142 is disordered; that stretch reads EPKYRIQEQESSGEEDSDLSPEEREKKRQFEM. A phosphoserine mark is found at S121, S122, S127, and S130. Residues 121–130 show a composition bias toward acidic residues; the sequence is SSGEEDSDLS. Over residues 131-142 the composition is skewed to basic and acidic residues; that stretch reads PEEREKKRQFEM. Residues 147–150 form a required for binding PPP1CC catalytic center, displacing metal ions and inhibition of PPP1CC catalytic activity region; the sequence is HYNE. The disordered stretch occupies residues 163 to 205; that stretch reads KDLHDDDEDEEMLETADGESMNTEESNQGSTPSDQQQNKLRSS. The span at 167-179 shows a compositional bias: acidic residues; it reads DDDEDEEMLETAD. The span at 182-205 shows a compositional bias: polar residues; sequence SMNTEESNQGSTPSDQQQNKLRSS.

Belongs to the protein phosphatase inhibitor 2 family. In terms of assembly, heterodimer with PP1. In terms of processing, phosphorylation on Thr-73 by GSK3 activates PP1 by dissociating the PP1-PPP1R2 complex. Phosphorylation on Ser-44 by ATM activates PP1 by dissociating the PP1-PPP1R2 complex.

In terms of biological role, inhibitor of protein-phosphatase 1. This Homo sapiens (Human) protein is Protein phosphatase inhibitor 2 (PPP1R2).